Consider the following 325-residue polypeptide: Tetraacyldisaccharide 4'-kinase (325 aa).

ATP is bound at residue 58-65 (TVGGSGKT).

Belongs to the LpxK family.

The enzyme catalyses a lipid A disaccharide + ATP = a lipid IVA + ADP + H(+). It participates in glycolipid biosynthesis; lipid IV(A) biosynthesis; lipid IV(A) from (3R)-3-hydroxytetradecanoyl-[acyl-carrier-protein] and UDP-N-acetyl-alpha-D-glucosamine: step 6/6. Transfers the gamma-phosphate of ATP to the 4'-position of a tetraacyldisaccharide 1-phosphate intermediate (termed DS-1-P) to form tetraacyldisaccharide 1,4'-bis-phosphate (lipid IVA). In Coxiella burnetii (strain RSA 331 / Henzerling II), this protein is Tetraacyldisaccharide 4'-kinase.